Reading from the N-terminus, the 211-residue chain is Uracil phosphoribosyltransferase (211 aa).

GTP is bound at residue 30–34; that stretch reads KGLVR. 5-phospho-alpha-D-ribose 1-diphosphate-binding positions include Arg-79, Arg-104, and 133–141; that span reads DPMLATGIT. Residues Ile-197 and 202 to 204 contribute to the uracil site; that span reads GDA. Residue Asp-203 coordinates 5-phospho-alpha-D-ribose 1-diphosphate.

This sequence belongs to the UPRTase family. Requires Mg(2+) as cofactor.

It catalyses the reaction UMP + diphosphate = 5-phospho-alpha-D-ribose 1-diphosphate + uracil. It participates in pyrimidine metabolism; UMP biosynthesis via salvage pathway; UMP from uracil: step 1/1. Its activity is regulated as follows. Allosterically activated by GTP. In terms of biological role, catalyzes the conversion of uracil and 5-phospho-alpha-D-ribose 1-diphosphate (PRPP) to UMP and diphosphate. The sequence is that of Uracil phosphoribosyltransferase from Pyrobaculum islandicum (strain DSM 4184 / JCM 9189 / GEO3).